Here is a 246-residue protein sequence, read N- to C-terminus: MGPQHLRLVQLFCLLGAISTLPRAGALLCYEATASRFRAVAFHNWKWLLMRNMVCKLQEGCEETLVFIETGTARGVVGFKGCSSSSSYPAQISYLVSPPGVSIASYSRVCRSYLCNNLTNLEPFVKLKASTPKSITSASCSCPTCVGEHMKDCLPNFVTTNSCPLAASTCYSSTLKFQAGFLNTTFLLMGCAREHNQLLADFHHIGSIKVTEVLNILEKSQIVGAASSRQDPAWGVVLGLLFAFRD.

Residues 1–26 form the signal peptide; the sequence is MGPQHLRLVQLFCLLGAISTLPRAGA. A glycan (N-linked (GlcNAc...) asparagine) is linked at asparagine 117. A UPAR/Ly6 domain is found at 142–223; that stretch reads CPTCVGEHMK…LNILEKSQIV (82 aa). Residue alanine 225 is the site of GPI-anchor amidated alanine attachment. Positions 226-246 are cleaved as a propeptide — removed in mature form; sequence ASSRQDPAWGVVLGLLFAFRD.

It localises to the cell membrane. The polypeptide is Ly6/PLAUR domain-containing protein 4 (LYPD4) (Homo sapiens (Human)).